Here is a 581-residue protein sequence, read N- to C-terminus: La-related protein 7 (581 aa).

At Met-1 the chain carries N-acetylmethionine. Over residues 1-10 the composition is skewed to polar residues; that stretch reads METESGNQKN. 3 disordered regions span residues 1–28, 188–368, and 410–440; these read METE…KKKR, NPPE…ERHK, and KSES…CPTQ. The 95-residue stretch at 28 to 122 folds into the HTH La-type RNA-binding domain; it reads RSRVKQVLAD…KPLGERPKDE (95 aa). The 79-residue stretch at 125 to 203 folds into the RRM domain; it reads RTVYVELLPK…PRKPGIFPKT (79 aa). Residues 219 to 228 are compositionally biased toward basic residues; that stretch reads KKKKKKKGRM. The span at 229–240 shows a compositional bias: basic and acidic residues; that stretch reads KKEDNVQAKEEN. Lys-237 is covalently cross-linked (Glycyl lysine isopeptide (Lys-Gly) (interchain with G-Cter in SUMO2)). Thr-257 carries the phosphothreonine modification. Residues Ser-258, Ser-261, Ser-273, Ser-298, Ser-299, and Ser-300 each carry the phosphoserine modification. Positions 316-335 are enriched in basic and acidic residues; it reads IQKDIIKEPSEASKENRDIE. Ser-337 is modified (phosphoserine). Thr-338 is subject to Phosphothreonine. Ser-351 bears the Phosphoserine mark. Basic residues predominate over residues 354–367; that stretch reads KTKRKHKKKHKERH. Lys-410 participates in a covalent cross-link: Glycyl lysine isopeptide (Lys-Gly) (interchain with G-Cter in SUMO2). Residues 449–562 enclose the xRRM domain; it reads QFVSGVIVKI…TEKLITKAEK (114 aa).

It belongs to the LARP7 family. Core component of the 7SK RNP complex, at least composed of 7SK RNA, LARP7, MEPCE, HEXIM1 (or HEXIM2) and P-TEFb (composed of CDK9 and CCNT1/cyclin-T1). Interacts with METTL16. Interacts with RBM7; upon genotoxic stress this interaction is enhanced, triggering the release of inactive P-TEFb complex from the core, yielding to P-TEFb complex activation. Associates with box C/D small nucleolar ribonucleoprotein (snoRNP) complexes.

It is found in the nucleus. The protein localises to the nucleoplasm. Functionally, RNA-binding protein that specifically binds distinct small nuclear RNA (snRNAs) and regulates their processing and function. Specifically binds the 7SK snRNA (7SK RNA) and acts as a core component of the 7SK ribonucleoprotein (RNP) complex, thereby acting as a negative regulator of transcription elongation by RNA polymerase II. The 7SK RNP complex sequesters the positive transcription elongation factor b (P-TEFb) in a large inactive 7SK RNP complex preventing RNA polymerase II phosphorylation and subsequent transcriptional elongation. The 7SK RNP complex also promotes snRNA gene transcription by RNA polymerase II via interaction with the little elongation complex (LEC). LARP7 specifically binds to the highly conserved 3'-terminal U-rich stretch of 7SK RNA; on stimulation, remains associated with 7SK RNA, whereas P-TEFb is released from the complex. LARP7 also acts as a regulator of mRNA splicing fidelity by promoting U6 snRNA processing. Specifically binds U6 snRNAs and associates with a subset of box C/D RNP complexes: promotes U6 snRNA 2'-O-methylation by facilitating U6 snRNA loading into box C/D RNP complexes. U6 snRNA 2'-O-methylation is required for mRNA splicing fidelity. Binds U6 snRNAs with a 5'-CAGGG-3' sequence motif. U6 snRNA processing is required for spermatogenesis. This is La-related protein 7 from Macaca fascicularis (Crab-eating macaque).